The primary structure comprises 265 residues: Small ribosomal subunit protein uS2 (265 aa).

This sequence belongs to the universal ribosomal protein uS2 family.

This Ligilactobacillus salivarius (strain UCC118) (Lactobacillus salivarius) protein is Small ribosomal subunit protein uS2.